The primary structure comprises 2672 residues: eIF-2-alpha kinase activator GCN1 (2672 aa).

11 HEAT repeats span residues 5–42 (LNWE…QETL), 79–117 (NLEP…WINS), 174–211 (CIFQ…YSKL), 227–267 (QAAL…NPPS), 329–366 (FASS…KISN), 372–410 (EDLT…THYE), 509–549 (HGHA…NSSI), 611–648 (KYVT…IFNI), 706–745 (IQPN…EEGV), 902–932 (QDYL…IDSI), and 933–970 (SLTY…EEDE). The stretch at 975–994 (LLLAMEIISVHAEAFEDPSI) is one HEAT 12; degenerate repeat. One copy of the HEAT 13; degenerate repeat lies at 995-1030 (PRISIVEVLLSLLSLPSKAKIAKDCFNALCQSISVA). 32 HEAT repeats span residues 1031–1067 (PNQE…LEPF), 1099–1138 (VVND…FTSE), 1185–1224 (STVA…REPI), 1243–1281 (QNSK…HLQQ), 1284–1321 (ARIH…QFKQ), 1363–1401 (LSEF…SLGK), 1405–1442 (PYVI…HTTG), 1444–1480 (GVKK…LDPT), 1484–1521 (ASLS…VIRN), 1523–1559 (EIQK…HYID), 1561–1598 (PSLA…LVDT), 1603–1640 (PYLQ…RLGE), 1641–1679 (EQFP…GLGL), 1681–1717 (KLDE…CFGS), 1721–1758 (PYIN…NYAT), 1760–1796 (AVDL…QVTG), 1825–1862 (DRRD…NTPR), 1863–1903 (AVKE…RVGG), 1905–1942 (ALSQ…SAST), 1947–1984 (QFQS…VVGK), 1985–2024 (TAVD…VIFP), 2026–2055 (LIPT…SALY), 2057–2095 (RLSI…SVND), 2097–2134 (EGLH…KTVL), 2138–2175 (VYIP…KVDK), 2206–2243 (RGPN…KTPA), 2250–2286 (VSVI…KIPM), 2290–2328 (PFIP…HQPR), 2347–2384 (GVKT…EEML), 2392–2429 (VAYA…ETGK), 2450–2487 (GLID…LEGE), and 2506–2546 (ENIN…FKFD). Positions 1330 to 1641 (LMEKLLNPTV…GALVERLGEE (312 aa)) are EF3-like region. The segment at 2207-2356 (GPNCVLPIFL…GVKTAMLKAL (150 aa)) is RWDBD region.

It belongs to the GCN1 family. In terms of assembly, interacts (via N- and C-terminus) with GCN2 (via N-terminal RWD domain); this interaction stimulates GCN2 kinase activity in a GCN20-dependent manner in response to amino acid starvation. Interacts (via C-terminus) with GCN20 (via N-terminus); this interaction stimulates GCN2 kinase activity in response to amino acid starvation. The GCN1-GCN20 complex interacts with GCN2 on translating ribosomes in amino acid-starved cells; GCN1 may bind near the ribosomal A-site and promotes the transfer of uncharged tRNAs from the A-site to the tRNA-binding domain in GCN2 for its subsequent kinase activation, and hence allowing GCN4 translational activation and derepression of amino acid biosynthetic genes. Interacts (via C-terminus) with YIH1 (via N-terminus); this interaction reduces the GCN1-GCN20 complex formation and prevents the interaction of GCN1 with GCN2 and GCN2 kinase activation in amino acid-starved cells. Interacts with GIR2; this interaction prevents the interaction of GCN1 with GCN2 and GCN2 kinase activation in amino acid-starved cells. Interacts (via middle region) with RPS10A and RPS10B; these interactions are direct and promote GCN2 kinase activation. Associates (via N-terminus) with ribosomes; this association is stimulated in a ATP- and GCN20-dependent manner and is necessary to activate GCN2 kinase activity.

Its subcellular location is the cytoplasm. Functionally, ribosome collision sensor that activates a translation quality control pathway when a ribosome has stalled during translation. Directly binds to the ribosome and acts as a sentinel for colliding ribosomes. GCN1 also acts as a positive activator of the integrated stress response (ISR) by mediating activation of GCN2 in response to low amino acid, carbon, or purine availability. Component of the GCN1-GCN20 complex that forms a complex with GCN2 on translating ribosomes: during this process, GCN1 acts as a chaperone to facilitate delivery of uncharged tRNAs that enter the A-site of ribosomes to the tRNA-binding domain of GCN2, and hence stimulating GCN2 kinase activity, leading to phosphorylation of eukaryotic translation initiation factor 2 (eIF-2-alpha/SUI2). eIF-2-alpha/SUI2 phosphorylation converts eIF-2-alpha/SUI2 into a global protein synthesis inhibitor, leading to a global attenuation of cap-dependent translation, and thus to a reduced overall utilization of amino acids, while concomitantly initiating the preferential translation of ISR-specific mRNAs, such as the transcriptional activator GCN4, and hence allowing GCN4-mediated reprogramming of amino acid biosynthetic gene expression to alleviate nutrient depletion. This Saccharomyces cerevisiae (strain ATCC 204508 / S288c) (Baker's yeast) protein is eIF-2-alpha kinase activator GCN1.